The chain runs to 359 residues: Probable 2-oxoacid dependent dioxygenase (359 aa).

In terms of domain architecture, Fe2OG dioxygenase spans K207–T308. Fe cation-binding residues include H231, D233, and H287. Residues P329–I359 are disordered. Over residues N349–I359 the composition is skewed to polar residues.

This sequence belongs to the iron/ascorbate-dependent oxidoreductase family. It depends on Fe(2+) as a cofactor. In terms of tissue distribution, expressed in leaves and seeds. All cultivars with seed-only-functional allele have low to non-detectable GSL-OH expression in the leaves.

It carries out the reaction gluconapin + AH2 + O2 = progoitrin + A + H2O. Its function is as follows. Necessary for the hydroxylation of but-3-enyl glucosinolate to 2-hydroxybut-3-enyl glucosinolate, which is toxic to insects, bacteria and nematodes, inhibits seed germination and produces bitter flavors. The protein is Probable 2-oxoacid dependent dioxygenase of Arabidopsis thaliana (Mouse-ear cress).